Consider the following 566-residue polypeptide: NAD-dependent malic enzyme (566 aa).

Tyr105 acts as the Proton donor in catalysis. Arg158 contributes to the NAD(+) binding site. Catalysis depends on Lys176, which acts as the Proton acceptor. 3 residues coordinate a divalent metal cation: Glu247, Asp248, and Asp271. NAD(+)-binding residues include Asp271 and Asn419.

It belongs to the malic enzymes family. As to quaternary structure, homotetramer. Mg(2+) serves as cofactor. Mn(2+) is required as a cofactor.

It carries out the reaction (S)-malate + NAD(+) = pyruvate + CO2 + NADH. The enzyme catalyses oxaloacetate + H(+) = pyruvate + CO2. In Acinetobacter baylyi (strain ATCC 33305 / BD413 / ADP1), this protein is NAD-dependent malic enzyme.